The chain runs to 82 residues: Small ribosomal subunit protein uS17 (82 aa).

This sequence belongs to the universal ribosomal protein uS17 family. As to quaternary structure, part of the 30S ribosomal subunit.

Functionally, one of the primary rRNA binding proteins, it binds specifically to the 5'-end of 16S ribosomal RNA. This is Small ribosomal subunit protein uS17 from Shewanella sp. (strain W3-18-1).